Here is a 197-residue protein sequence, read N- to C-terminus: Probable nicotinate-nucleotide adenylyltransferase (197 aa).

It belongs to the NadD family.

It catalyses the reaction nicotinate beta-D-ribonucleotide + ATP + H(+) = deamido-NAD(+) + diphosphate. The protein operates within cofactor biosynthesis; NAD(+) biosynthesis; deamido-NAD(+) from nicotinate D-ribonucleotide: step 1/1. Functionally, catalyzes the reversible adenylation of nicotinate mononucleotide (NaMN) to nicotinic acid adenine dinucleotide (NaAD). This is Probable nicotinate-nucleotide adenylyltransferase from Bordetella parapertussis (strain 12822 / ATCC BAA-587 / NCTC 13253).